The chain runs to 235 residues: Phosphoribosylaminoimidazole-succinocarboxamide synthase (235 aa).

The protein belongs to the SAICAR synthetase family.

It carries out the reaction 5-amino-1-(5-phospho-D-ribosyl)imidazole-4-carboxylate + L-aspartate + ATP = (2S)-2-[5-amino-1-(5-phospho-beta-D-ribosyl)imidazole-4-carboxamido]succinate + ADP + phosphate + 2 H(+). It participates in purine metabolism; IMP biosynthesis via de novo pathway; 5-amino-1-(5-phospho-D-ribosyl)imidazole-4-carboxamide from 5-amino-1-(5-phospho-D-ribosyl)imidazole-4-carboxylate: step 1/2. The sequence is that of Phosphoribosylaminoimidazole-succinocarboxamide synthase from Exiguobacterium sibiricum (strain DSM 17290 / CCUG 55495 / CIP 109462 / JCM 13490 / 255-15).